A 716-amino-acid polypeptide reads, in one-letter code: Probable glutamate--tRNA ligase, cytoplasmic (716 aa).

At S190 the chain carries Phosphoserine. 210–212 (RFP) is a binding site for L-glutamate. The 'HIGH' region signature appears at 215-224 (PSGYLHIGHA). Residue H220 participates in ATP binding. L-glutamate is bound by residues D246, 386–390 (YDFAC), and R404. Residues E407 and 441–445 (LLSKR) each bind ATP. The 'KMSKS' region signature appears at 441-445 (LLSKR).

The protein belongs to the class-I aminoacyl-tRNA synthetase family. Glutamate--tRNA ligase type 2 subfamily. Component of a yeast aminoacyl-tRNA synthase (aaRS) complex formed by methionyl-tRNA synthase, glutamyl-tRNA synthase and the tRNA aminoacylation cofactor arc1 in a stoichiometric complex. Interacts with arc1/SPAC30C2.04.

It localises to the cytoplasm. The protein resides in the nucleus. It carries out the reaction tRNA(Glu) + L-glutamate + ATP = L-glutamyl-tRNA(Glu) + AMP + diphosphate. Catalyzes the attachment of glutamate to tRNA(Glu) in a two-step reaction: glutamate is first activated by ATP to form Glu-AMP and then transferred to the acceptor end of tRNA(Glu). The sequence is that of Probable glutamate--tRNA ligase, cytoplasmic (gus1) from Schizosaccharomyces pombe (strain 972 / ATCC 24843) (Fission yeast).